The following is a 58-amino-acid chain: Light-harvesting protein B-870 alpha chain (58 aa).

Residues 1–15 (MSKFYKIWLVFDPRR) lie on the Cytoplasmic side of the membrane. A helical membrane pass occupies residues 16-36 (VFVAQGVFLFLLAVLIHLILL). Histidine 32 contributes to the a bacteriochlorophyll binding site. Over 37 to 58 (STPAFNWLTVATAKHGYVAAAQ) the chain is Periplasmic.

The protein belongs to the antenna complex alpha subunit family. As to quaternary structure, the core complex is formed by different alpha and beta chains, binding bacteriochlorophyll molecules, and arranged most probably in tetrameric structures disposed around the reaction center. The non-pigmented gamma chains may constitute additional components.

The protein localises to the cell inner membrane. Functionally, antenna complexes are light-harvesting systems, which transfer the excitation energy to the reaction centers. This Rhodobacter capsulatus (Rhodopseudomonas capsulata) protein is Light-harvesting protein B-870 alpha chain (pufA).